Reading from the N-terminus, the 226-residue chain is 3-isopropylmalate dehydratase small subunit (226 aa).

The disordered stretch occupies residues E204 to R226.

The protein belongs to the LeuD family. LeuD type 1 subfamily. As to quaternary structure, heterodimer of LeuC and LeuD.

It catalyses the reaction (2R,3S)-3-isopropylmalate = (2S)-2-isopropylmalate. The protein operates within amino-acid biosynthesis; L-leucine biosynthesis; L-leucine from 3-methyl-2-oxobutanoate: step 2/4. Catalyzes the isomerization between 2-isopropylmalate and 3-isopropylmalate, via the formation of 2-isopropylmaleate. The sequence is that of 3-isopropylmalate dehydratase small subunit from Bifidobacterium animalis subsp. lactis (strain AD011).